We begin with the raw amino-acid sequence, 242 residues long: Transcriptional regulatory protein btr (242 aa).

An HTH crp-type domain is found at 158–231; the sequence is MRSEQRLAAF…QREVRLIDLP (74 aa). Positions 191–210 form a DNA-binding region, H-T-H motif; that stretch reads REEIGNYLGLTLETVSRLFS.

May regulate gene expression in response to changes in oxygen levels or to changes in the redox potential of the bacterial environment. This Bordetella pertussis (strain Tohama I / ATCC BAA-589 / NCTC 13251) protein is Transcriptional regulatory protein btr (btr).